Reading from the N-terminus, the 278-residue chain is Large ribosomal subunit protein uL2 (278 aa).

Residues 224–262 form a disordered region; that stretch reads VMNPVDHPLGGGEGRTSGGRHPVTPWGKPTKGFKTRKTR.

The protein belongs to the universal ribosomal protein uL2 family. Part of the 50S ribosomal subunit. Forms a bridge to the 30S subunit in the 70S ribosome.

One of the primary rRNA binding proteins. Required for association of the 30S and 50S subunits to form the 70S ribosome, for tRNA binding and peptide bond formation. It has been suggested to have peptidyltransferase activity; this is somewhat controversial. Makes several contacts with the 16S rRNA in the 70S ribosome. This is Large ribosomal subunit protein uL2 from Leptospira biflexa serovar Patoc (strain Patoc 1 / Ames).